A 49-amino-acid polypeptide reads, in one-letter code: Small ribosomal subunit protein eS31 (49 aa).

Zn(2+) is bound by residues Cys21, Cys24, Cys39, and Cys42. The C4-type zinc finger occupies 21-42 (CPRCGPGTFLADHKNRLTCGKC).

The protein belongs to the eukaryotic ribosomal protein eS31 family. As to quaternary structure, part of the 30S ribosomal subunit. It depends on Zn(2+) as a cofactor.

The sequence is that of Small ribosomal subunit protein eS31 from Methanosarcina barkeri (strain Fusaro / DSM 804).